We begin with the raw amino-acid sequence, 452 residues long: UPF0210 protein Cthe_0410 (452 aa).

Belongs to the UPF0210 family. Homodimer.

In Acetivibrio thermocellus (strain ATCC 27405 / DSM 1237 / JCM 9322 / NBRC 103400 / NCIMB 10682 / NRRL B-4536 / VPI 7372) (Clostridium thermocellum), this protein is UPF0210 protein Cthe_0410.